We begin with the raw amino-acid sequence, 32 residues long: Protamine-1 (32 aa).

The interval Pro-1–Arg-32 is disordered.

Testis.

It is found in the nucleus. Its subcellular location is the chromosome. Functionally, protamines substitute for histones in the chromatin of sperm during the haploid phase of spermatogenesis. They compact sperm DNA into a highly condensed, stable and inactive complex. The sequence is that of Protamine-1 from Esox lucius (Northern pike).